The sequence spans 876 residues: Bifunctional uridylyltransferase/uridylyl-removing enzyme (876 aa).

The segment at 1 to 332 (MPYQSPITFQ…NNGEEAEAVI (332 aa)) is uridylyltransferase. Residues 333–692 (IDDDFQRRGN…LSKKATRGGT (360 aa)) are uridylyl-removing. In terms of domain architecture, HD spans 451–573 (VDEHSIRLLK…VRDEERLEYL (123 aa)). ACT domains are found at residues 693-777 (EVFI…RIPR) and 800-876 (LMEF…PSAQ).

It belongs to the GlnD family. Requires Mg(2+) as cofactor.

It carries out the reaction [protein-PII]-L-tyrosine + UTP = [protein-PII]-uridylyl-L-tyrosine + diphosphate. The catalysed reaction is [protein-PII]-uridylyl-L-tyrosine + H2O = [protein-PII]-L-tyrosine + UMP + H(+). Uridylyltransferase (UTase) activity is inhibited by glutamine, while glutamine activates uridylyl-removing (UR) activity. Modifies, by uridylylation and deuridylylation, the PII regulatory proteins (GlnB and homologs), in response to the nitrogen status of the cell that GlnD senses through the glutamine level. Under low glutamine levels, catalyzes the conversion of the PII proteins and UTP to PII-UMP and PPi, while under higher glutamine levels, GlnD hydrolyzes PII-UMP to PII and UMP (deuridylylation). Thus, controls uridylylation state and activity of the PII proteins, and plays an important role in the regulation of nitrogen assimilation and metabolism. The protein is Bifunctional uridylyltransferase/uridylyl-removing enzyme of Vibrio cholerae serotype O1 (strain ATCC 39315 / El Tor Inaba N16961).